The chain runs to 835 residues: Probable alpha-glucuronidase A (835 aa).

Positions 1–18 are cleaved as a signal peptide; that stretch reads MRWSFLTVLLWLVSLTGA. N-linked (GlcNAc...) asparagine glycans are attached at residues asparagine 49, asparagine 101, asparagine 148, asparagine 221, asparagine 278, asparagine 309, asparagine 342, asparagine 460, asparagine 522, asparagine 571, asparagine 677, and asparagine 727.

It belongs to the glycosyl hydrolase 67 family.

It localises to the secreted. The catalysed reaction is an alpha-D-glucuronoside + H2O = D-glucuronate + an alcohol. Alpha-glucuronidase involved in the hydrolysis of xylan, a major structural heterogeneous polysaccharide found in plant biomass representing the second most abundant polysaccharide in the biosphere, after cellulose. Releases 4-O-methylglucuronic acid from xylan. This chain is Probable alpha-glucuronidase A (aguA), found in Aspergillus oryzae (strain ATCC 42149 / RIB 40) (Yellow koji mold).